Here is a 203-residue protein sequence, read N- to C-terminus: Cilia- and flagella-associated protein 20 (203 aa).

Belongs to the CFAP20 family.

It localises to the nucleus. It is found in the cytoplasm. The protein localises to the cytoskeleton. Its subcellular location is the microtubule organizing center. The protein resides in the centrosome. It localises to the centriole. It is found in the cilium basal body. The protein localises to the cilium axoneme. In terms of biological role, cilium- and flagellum-specific protein that plays a role in axonemal structure organization and motility. Microtubule inner protein (MIP) part of the dynein-decorated doublet microtubules (DMTs) in cilia axoneme, which is required for motile cilia beating. Involved in the regulation of the size and morphology of cilia. Required for axonemal microtubules polyglutamylation. The protein is Cilia- and flagella-associated protein 20 of Caenorhabditis briggsae.